The chain runs to 146 residues: D-aminoacyl-tRNA deacylase (146 aa).

The Gly-cisPro motif, important for rejection of L-amino acids motif lies at 137-138 (GP).

It belongs to the DTD family. Homodimer.

The protein resides in the cytoplasm. It carries out the reaction glycyl-tRNA(Ala) + H2O = tRNA(Ala) + glycine + H(+). The catalysed reaction is a D-aminoacyl-tRNA + H2O = a tRNA + a D-alpha-amino acid + H(+). An aminoacyl-tRNA editing enzyme that deacylates mischarged D-aminoacyl-tRNAs. Also deacylates mischarged glycyl-tRNA(Ala), protecting cells against glycine mischarging by AlaRS. Acts via tRNA-based rather than protein-based catalysis; rejects L-amino acids rather than detecting D-amino acids in the active site. By recycling D-aminoacyl-tRNA to D-amino acids and free tRNA molecules, this enzyme counteracts the toxicity associated with the formation of D-aminoacyl-tRNA entities in vivo and helps enforce protein L-homochirality. The polypeptide is D-aminoacyl-tRNA deacylase (Psychrobacter sp. (strain PRwf-1)).